The following is a 779-amino-acid chain: Anion/proton exchange transporter GEF1 (779 aa).

At 1–75 the chain is on the cytoplasmic side; that stretch reads MPTTYVPINQ…REVIWDRAKT (75 aa). The chain crosses the membrane as a helical span at residues 76–96; that stretch reads FITLSSTAIVIGCIAGFLQVF. Residues 97–154 are Lumenal-facing; that stretch reads TETLVNWKTGHCQRNWLLNKSFCCNGVVNEVTSTSNLLLKRQEFECEAQGLWIAWKGH. The helical transmembrane segment at 155 to 175 threads the bilayer; the sequence is VSPFIIFMLLSVLFALISTLL. The Cytoplasmic segment spans residues 176-177; that stretch reads VK. Residues 178–198 form a helical membrane-spanning segment; that stretch reads YVAPMATGSGISEIKVWVSGF. Residues 199-203 lie on the Lumenal side of the membrane; sequence EYNKE. Residues 204–224 traverse the membrane as a helical segment; that stretch reads FLGFLTLVIKSVALPLAISSG. At 225 to 264 the chain is on the cytoplasmic side; the sequence is LSVGKEGPSVHYATCCGYLLTKWLLRDTLTYSSQYEYITA. Residues 265–285 form a helical membrane-spanning segment; that stretch reads ASGAGVAVAFGAPIGGVLFGL. At 286–296 the chain is on the lumenal side; sequence EEIASANRFNS. The chain crosses the membrane as a helical span at residues 297–319; sequence STLWKSYYVALVAITTLKYIDPF. Residues 320-336 are Cytoplasmic-facing; sequence RNGRVILFNVTYDRDWK. Residues 337–357 form a helical membrane-spanning segment; it reads VQEIPIFIALGIFGGLYGKYI. At 358-369 the chain is on the lumenal side; sequence SKWNINFIHFRK. Residues 370 to 390 form a helical membrane-spanning segment; that stretch reads MYLSSWPVQEVLFLATLTALI. Topologically, residues 391 to 436 are cytoplasmic; the sequence is SYFNEFLKLDMTESMGILFHECVKNDNTSTFSHRLCQLDENTHAFE. The helical transmembrane segment at 437–457 threads the bilayer; sequence FLKIFTSLCFATVIRALLVVV. Topologically, residues 458–465 are lumenal; that stretch reads SYGARVPA. A helical transmembrane segment spans residues 466-486; the sequence is GIFVPSMAVGATFGRAVSLLV. Residues 487 to 500 are Cytoplasmic-facing; sequence ERFISGPSVITPGA. Residues 501–523 form a helical membrane-spanning segment; that stretch reads YAFLGAAATLSGITNLTLTVVVI. The Lumenal segment spans residues 524-529; it reads MFELTG. The helical transmembrane segment at 530–552 threads the bilayer; that stretch reads AFMYIIPLMIVVAITRIILSTSG. The Cytoplasmic segment spans residues 553–779; it reads ISGGIADQMI…FTTNRNGNVI (227 aa). CBS domains are found at residues 591 to 659 and 688 to 744; these read MSSK…VNST and MNES…YREV.

Belongs to the chloride channel (TC 2.A.49) family. In terms of assembly, homodimer. Interacts with GET3. Proteolytically processed in the secretory pathway by protease KEX2 within the first extracellular loop. However, both the N- and C-terminal products of the cleavage reaction are required for assembly of a functional channel.

It localises to the golgi apparatus membrane. The protein localises to the endosome membrane. Its subcellular location is the prevacuolar compartment membrane. Its function is as follows. Anion/proton exchange transporter involved in iron and copper cation homeostasis. Involved in intracellular iron metabolism during growth on fermentable and non fermentable carbon sources. Required for proper copper-loading and maturation of multicopper oxidase FET3. Important for adjusting intracellular compartment pH to more alkaline pH under iron limitation. May also transport chloride ions through the plasma membrane. This Saccharomyces cerevisiae (strain ATCC 204508 / S288c) (Baker's yeast) protein is Anion/proton exchange transporter GEF1 (GEF1).